The primary structure comprises 138 residues: Transcription antitermination protein NusB (138 aa).

It belongs to the NusB family.

Involved in transcription antitermination. Required for transcription of ribosomal RNA (rRNA) genes. Binds specifically to the boxA antiterminator sequence of the ribosomal RNA (rrn) operons. The chain is Transcription antitermination protein NusB from Helicobacter pylori (strain J99 / ATCC 700824) (Campylobacter pylori J99).